A 3912-amino-acid polypeptide reads, in one-letter code: Chondramide synthase cmdD (3912 aa).

In terms of domain architecture, Carrier 1 spans 1411 to 1485; sequence APRNAREETL…ALAEVASASK (75 aa). Serine 1446 is modified (O-(pantetheine 4'-phosphoryl)serine). A compositionally biased stretch (acidic residues) spans 1995 to 2029; the sequence is ADEDDEEDDELDEEFDAEVDEEDEDEEEEEDDDGE. Residues 1995 to 2030 are disordered; the sequence is ADEDDEEDDELDEEFDAEVDEEDEDEEEEEDDDGEN. The Carrier 2 domain occupies 2989–3064; the sequence is APRTATEETL…VLARVIDEAL (76 aa). Position 3024 is an O-(pantetheine 4'-phosphoryl)serine (serine 3024).

The protein belongs to the ATP-dependent AMP-binding enzyme family. Requires pantetheine 4'-phosphate as cofactor.

Its function is as follows. Involved in the synthesis of chondramides. Activates R-beta-tyrosine and probably phenylalanine. The protein is Chondramide synthase cmdD of Chondromyces crocatus.